We begin with the raw amino-acid sequence, 152 residues long: Ribonuclease pancreatic gamma-type (152 aa).

The N-terminal stretch at 1–25 (MGLEKSLFLFSLLVLVLGWVQPSLG) is a signal peptide. 2 residues coordinate substrate: Lys-35 and Arg-38. Residue His-40 is the Proton acceptor of the active site. 4 disulfide bridges follow: Cys-54/Cys-112, Cys-68/Cys-123, Cys-86/Cys-138, and Cys-93/Cys-100. Residues 69-73 (KSMNT), Lys-94, and Arg-113 each bind substrate. The Proton donor role is filled by His-147.

This sequence belongs to the pancreatic ribonuclease family. Monomer.

It is found in the secreted. The enzyme catalyses an [RNA] containing cytidine + H2O = an [RNA]-3'-cytidine-3'-phosphate + a 5'-hydroxy-ribonucleotide-3'-[RNA].. It catalyses the reaction an [RNA] containing uridine + H2O = an [RNA]-3'-uridine-3'-phosphate + a 5'-hydroxy-ribonucleotide-3'-[RNA].. In terms of biological role, endonuclease that catalyzes the cleavage of RNA on the 3' side of pyrimidine nucleotides. Acts on single-stranded and double-stranded RNA. This Rattus norvegicus (Rat) protein is Ribonuclease pancreatic gamma-type.